Reading from the N-terminus, the 399-residue chain is Protein phosphatase 2C 37 (399 aa).

In terms of domain architecture, PPM-type phosphatase spans 104-389 (KIGTTSVCGR…DNVSVVVVDL (286 aa)). Mn(2+)-binding residues include aspartate 142 and glycine 143. Zn(2+) contacts are provided by cysteine 146, histidine 148, cysteine 208, and cysteine 210. Aspartate 327, aspartate 331, and aspartate 380 together coordinate Mn(2+).

It belongs to the PP2C family. In terms of assembly, interacts with AKT2/AKT3. Interacts with ABA-bounded PYR1, PYL1, PYL2, PYL3, PYL4, PYL9 and PYL12, and with free PYL2, PYL3, PYL4 and PYL13. Binds to and inactivates SLAC1 and SRK2E. The inactivation of SRK2E does not require phosphatase activity. Interacts with CBL1, CBL2, CBL3, CBL5, and CBL7, but not CBL4, CBL6, and CBL9. Interacts with RGLG1 and RGLG5. Interacts with KIN10. Requires Mg(2+) as cofactor. It depends on Mn(2+) as a cofactor. Post-translationally, ubiquitinated by RGLG1 and RGLG5 in response to abscisic acid (ABA). Ubiquitination of PP2CA leads to its degradation by the proteasome. In terms of tissue distribution, mostly expressed in seeds and leaves, and, to a lower extent, in roots, stems, and flowers, particularly in siliques. Essentially found in the phloem.

The enzyme catalyses O-phospho-L-seryl-[protein] + H2O = L-seryl-[protein] + phosphate. It carries out the reaction O-phospho-L-threonyl-[protein] + H2O = L-threonyl-[protein] + phosphate. Repressed by PYR/PYL/RCAR ABA receptors in an ABA-dependent manner. Major negative regulator of abscisic acid (ABA) responses during seed germination and cold acclimation. Confers insensitivity to ABA. Modulates negatively the AKT2/3 activity, which mediates K(+) transport and membrane polarization during stress situations, probably by dephosphorylation. Prevents stomata closure by inactivating the S-type anion efflux channel SLAC1 and its activator SRK2E. Represses KIN10 activity by the specific dephosphorylation of its T-loop Thr-198, leading to a poststress inactivation of SnRK1 signaling. The chain is Protein phosphatase 2C 37 (PP2CA) from Arabidopsis thaliana (Mouse-ear cress).